A 298-amino-acid chain; its full sequence is Ribosomal protein L11 methyltransferase (298 aa).

Threonine 152, glycine 176, aspartate 198, and asparagine 236 together coordinate S-adenosyl-L-methionine.

This sequence belongs to the methyltransferase superfamily. PrmA family.

The protein resides in the cytoplasm. The enzyme catalyses L-lysyl-[protein] + 3 S-adenosyl-L-methionine = N(6),N(6),N(6)-trimethyl-L-lysyl-[protein] + 3 S-adenosyl-L-homocysteine + 3 H(+). Functionally, methylates ribosomal protein L11. The polypeptide is Ribosomal protein L11 methyltransferase (Polaromonas sp. (strain JS666 / ATCC BAA-500)).